A 249-amino-acid polypeptide reads, in one-letter code: 2,3-bisphosphoglycerate-dependent phosphoglycerate mutase (249 aa).

Substrate contacts are provided by residues 8–15 (RHGESTWN), 21–22 (TG), Arg60, 87–90 (ERHY), Lys98, 114–115 (RR), and 183–184 (GN). His9 functions as the Tele-phosphohistidine intermediate in the catalytic mechanism. Glu87 (proton donor/acceptor) is an active-site residue.

This sequence belongs to the phosphoglycerate mutase family. BPG-dependent PGAM subfamily.

It carries out the reaction (2R)-2-phosphoglycerate = (2R)-3-phosphoglycerate. The protein operates within carbohydrate degradation; glycolysis; pyruvate from D-glyceraldehyde 3-phosphate: step 3/5. Catalyzes the interconversion of 2-phosphoglycerate and 3-phosphoglycerate. The protein is 2,3-bisphosphoglycerate-dependent phosphoglycerate mutase of Methanoregula boonei (strain DSM 21154 / JCM 14090 / 6A8).